A 525-amino-acid polypeptide reads, in one-letter code: MDLPVGPGAAGPSNVPAFLTKLWTLVSDPDTDALICWSPSGNSFHVLDQGQFAKEVLPKYFKHSNMASFVRQLNMYGFRKVVHIEQGGLVKPERDDTEFQHPCFLRGQEQLLENIKRKVTSVSTLRSEDIKIRQDSVTKLLTDVQLMKGKQESMDSKLLAMKHENEALWREVASLRQKHAQQQKVVNKLIQFLISLVQSNRILGVKRKIPLMLNDGGPAHPMPKYGRQYSLEHIHGPGPYPAPSPAYSGSSLYSPDAVTSSGPIISDITELAPGSPVASSGGSVDERPLSSSPLVRVKEEPPSPPQSPRAEGASPGRPSSMVETPLSPTTLIDSILRESEPTPVASTTPLVDTGGRPPSPLPASAPEKCLSVACLDKTELSDHLDAMDSNLDNLQTMLTSHGFSVDTSTLLDLFSPSVTVPDMSLPDLDSSLASIQELLSPQEPPRPLEAEKSSPDSGKQLVHYTAQPLLLLDPGSVDVGSSDLPVLFELGEGSYFSEGDDYSDDPTISLLTGSEPPKAKDPTVS.

Met1 is subject to N-acetylmethionine. Residues 15-120 are DNA-binding domain; that stretch reads VPAFLTKLWT…LLENIKRKVT (106 aa). An N6-acetyllysine modification is found at Lys80. Lys91 is subject to N6-acetyllysine; alternate. Lys91 participates in a covalent cross-link: Glycyl lysine isopeptide (Lys-Gly) (interchain with G-Cter in SUMO2); alternate. Lys118 is subject to N6-acetyllysine. At Ser121 the chain carries Phosphoserine; by MAPKAPK2. Positions 130–203 are hydrophobic repeat HR-A/B; the sequence is IKIRQDSVTK…ISLVQSNRIL (74 aa). Lys131 is covalently cross-linked (Glycyl lysine isopeptide (Lys-Gly) (interchain with G-Cter in SUMO2)). Thr142 carries the phosphothreonine; by CK2 modification. Lys150 and Lys188 each carry N6-acetyllysine. Positions 203–224 are d domain; sequence LGVKRKIPLMLNDGGPAHPMPK. At Lys208 the chain carries N6-acetyllysine; alternate. Lys208 participates in a covalent cross-link: Glycyl lysine isopeptide (Lys-Gly) (interchain with G-Cter in SUMO2); alternate. The regulatory domain stretch occupies residues 221 to 310; the sequence is PMPKYGRQYS…PPSPPQSPRA (90 aa). Lys224 is covalently cross-linked (Glycyl lysine isopeptide (Lys-Gly) (interchain with G-Cter in SUMO2)). Residue Ser230 is modified to Phosphoserine; by CAMK2A. The segment at 266–365 is disordered; the sequence is SDITELAPGS…RPPSPLPASA (100 aa). The span at 272–283 shows a compositional bias: low complexity; sequence APGSPVASSGGS. Residues Ser275 and Ser292 each carry the phosphoserine modification. Lys298 carries the post-translational modification N6-acetyllysine; alternate. Residue Lys298 forms a Glycyl lysine isopeptide (Lys-Gly) (interchain with G-Cter in SUMO2); alternate linkage. Lys298 is covalently cross-linked (Glycyl lysine isopeptide (Lys-Gly) (interchain with G-Cter in SUMO); alternate). Ser303 is subject to Phosphoserine; by GSK3-beta. Ser307 carries the phosphoserine; by MAPK3 modification. Ser314 and Ser319 each carry phosphoserine. Phosphoserine; by PKA is present on Ser320. Position 324 is a phosphothreonine (Thr324). Residue Ser327 is modified to Phosphoserine; by MAPK12. Position 346 is a phosphoserine (Ser346). Ser359 carries the phosphoserine; by MAPK8 modification. The transactivation domain stretch occupies residues 367–525; the sequence is EKCLSVACLD…PPKAKDPTVS (159 aa). Positions 380–405 are hydrophobic repeat HR-C; the sequence is LSDHLDAMDSNLDNLQTMLTSHGFSV. The 9aaTAD signature appears at 408–416; sequence STLLDLFSP. A Phosphoserine; by PLK1 modification is found at Ser415. Phosphoserine is present on Ser440. Positions 495–525 are disordered; that stretch reads YFSEGDDYSDDPTISLLTGSEPPKAKDPTVS. At Lys520 the chain carries N6-acetyllysine.

Belongs to the HSF family. In terms of assembly, monomer; cytoplasmic latent and transcriptionally inactive monomeric form in unstressed cells. Homotrimer; in response to stress, such as heat shock, homotrimerizes and translocates into the nucleus, binds to heat shock element (HSE) sequences in promoter of heat shock protein (HSP) genes and acquires transcriptional ability. Interacts (via monomeric form) with FKBP4; this interaction occurs in unstressed cells. Associates (via monomeric form) with HSP90 proteins in a multichaperone complex in unnstressed cell; this association maintains HSF1 in a non-DNA-binding and transcriptional inactive form by preventing HSF1 homotrimerization. Homotrimeric transactivation activity is modulated by protein-protein interactions and post-translational modifications. Interacts with HSP90AA1; this interaction is decreased in a IER5-dependent manner, promoting HSF1 accumulation in the nucleus, homotrimerization and DNA-binding activities. Part (via regulatory domain in the homotrimeric form) of a large heat shock-induced HSP90-dependent multichaperone complex at least composed of FKBP4, FKBP5, HSP90 proteins, PPID, PPP5C and PTGES3; this association maintains the HSF1 homotrimeric DNA-bound form in a transcriptionally inactive form. Interacts with BAG3 (via BAG domain); this interaction occurs in normal and heat-shocked cells promoting nuclear shuttling of HSF1 in a BAG3-dependent manner. Interacts (via homotrimeric and hyperphosphorylated form) with FKBP4; this interaction occurs upon heat shock in a HSP90-dependent multichaperone complex. Interacts (via homotrimeric form preferentially) with EEF1A proteins. In heat shocked cells, stress-denatured proteins compete with HSF1 homotrimeric DNA-bound form for association of the HSP90-dependent multichaperone complex, and hence alleviating repression of HSF1-mediated transcriptional activity. Interacts (via homotrimeric form preferentially) with DAXX; this interaction relieves homotrimeric HSF1 from repression of its transcriptional activity by HSP90-dependent multichaperone complex upon heat shock. Interacts (via D domain and preferentially with hyperphosphorylated form) with JNK1; this interaction occurs under both normal growth conditions and immediately upon heat shock. Interacts (via D domain and preferentially with hyperphosphorylated form) with MAPK3; this interaction occurs upon heat shock. Interacts with IER5 (via central region); this interaction promotes PPP2CA-induced dephosphorylation on Ser-121, Ser-307, Ser-314 and Thr-324 and HSF1 transactivation activity. Found in a ribonucleoprotein complex composed of the HSF1 homotrimeric form, translation elongation factor eEF1A proteins and non-coding RNA heat shock RNA-1 (HSR1); this complex occurs upon heat shock and stimulates HSF1 DNA-binding activity. Interacts (via transactivation domain) with HSPA1A/HSP70 and DNAJB1; these interactions result in the inhibition of heat shock- and HSF1-induced transcriptional activity during the attenuation and recovery phase from heat shock. Interacts (via Ser-303 and Ser-307 phosphorylated form) with YWHAE; this interaction promotes HSF1 sequestration in the cytoplasm in an ERK-dependent manner. Found in a complex with IER5 and PPP2CA. Interacts with TPR; this interaction increases upon heat shock and stimulates export of HSP70 mRNA. Interacts with SYMPK (via N-terminus) and CSTF2; these interactions occur upon heat shock. Interacts (via transactivation domain) with HSPA8. Interacts with EEF1D; this interaction occurs at heat shock promoter element (HSE) sequences. Interacts with MAPKAPK2. Interacts with PRKACA/PKA. Interacts (via transactivation domain) with GTF2A2. Interacts (via transactivation domain) with GTF2B. Interacts (via transactivation domain) with TBP. Interacts with CDK9, CCNT1 and EP300. Interacts (via N-terminus) with XRCC5 (via N-terminus) and XRCC6 (via N-terminus); these interactions are direct and prevent XRCC5/XRCC6 heterodimeric binding and non-homologous end joining (NHEJ) repair activities induced by ionizing radiation (IR). Interacts with PLK1; this interaction occurs during the early mitotic period, increases upon heat shock but does not modulate neither HSF1 homotrimerization and DNA-binding activities. Interacts with CDC20; this interaction occurs in mitosis in a MAD2L1-dependent manner and prevents PLK1-stimulated degradation of HSF1 by blocking the recruitment of the SCF(BTRC) ubiquitin ligase complex. Interacts with MAD2L1; this interaction occurs in mitosis. Interacts with BTRC; this interaction occurs during mitosis, induces its ubiquitin-dependent degradation following stimulus-dependent phosphorylation, a process inhibited by CDC20. Interacts with HSP90AA1 and HSP90AB1. Forms a complex with TTC5/STRAP and p300/EP300; these interactions augment chromatin-bound HSF1 and p300/EP300 histone acetyltransferase activity. Phosphorylated. Phosphorylated in unstressed cells; this phosphorylation is constitutive and implicated in the repression of HSF1 transcriptional activity. Phosphorylated on Ser-121 by MAPKAPK2; this phosphorylation promotes interaction with HSP90 proteins and inhibits HSF1 homotrimerization, DNA-binding and transactivation activities. Phosphorylation on Ser-303 by GSK3B/GSK3-beta and on Ser-307 by MAPK3 within the regulatory domain is involved in the repression of HSF1 transcriptional activity and occurs in a RAF1-dependent manner. Phosphorylation on Ser-303 and Ser-307 increases HSF1 nuclear export in a YWHAE- and XPO1/CRM1-dependent manner. Phosphorylation on Ser-307 is a prerequisite for phosphorylation on Ser-303. According to, Ser-303 is not phosphorylated in unstressed cells. Phosphorylated on Ser-415 by PLK1; phosphorylation promotes nuclear translocation upon heat shock. Hyperphosphorylated upon heat shock and during the attenuation and recovery phase period of the heat shock response. Phosphorylated on Thr-142; this phosphorylation increases HSF1 transactivation activity upon heat shock. Phosphorylation on Ser-230 by CAMK2A; this phosphorylation enhances HSF1 transactivation activity upon heat shock. Phosphorylation on Ser-327 by MAPK12; this phosphorylation enhances HSF1 nuclear translocation, homotrimerization and transactivation activities upon heat shock. Phosphorylated on Ser-320 by PRKACA/PKA; this phosphorylation promotes nuclear localization and transcriptional activity upon heat shock. Phosphorylated on Ser-359 by MAPK8; this phosphorylation occurs upon heat shock, induces HSF1 translocation into nuclear stress bodies and negatively regulates transactivation activity. Neither basal nor stress-inducible phosphorylation on Ser-230, Ser-292, Ser-303, Ser-307, Ser-314, Ser-319, Ser-320, Thr-324, Ser-327, Ser-339, Ser-346, Ser-359 and Ser-364 within the regulatory domain is involved in the regulation of HSF1 subcellular localization or DNA-binding activity; however, it negatively regulates HSF1 transactivation activity. Phosphorylated by PLK1 in the early mitotic period; this phosphorylation regulates HSF1 localization to the spindle pole, the recruitment of the SCF(BTRC) ubiquitin ligase complex inducing HSF1 degradation, and hence mitotic progression. Dephosphorylated on Ser-121, Ser-307, Ser-314, Thr-324 by phosphatase PPP2CA in an IER5-dependent manner, leading to HSF1-mediated transactivation activity. Post-translationally, sumoylated with SUMO1 and SUMO2 upon heat shock in a ERK2-dependent manner. Sumoylated by SUMO1 on Lys-298; sumoylation occurs upon heat shock and promotes its localization to nuclear stress bodies and DNA-binding activity. Phosphorylation on Ser-303 and Ser-307 is probably a prerequisite for sumoylation. In terms of processing, acetylated on Lys-118; this acetylation is decreased in a IER5-dependent manner. Acetylated on Lys-118, Lys-208 and Lys-298; these acetylations occur in a EP300-dependent manner. Acetylated on Lys-80; this acetylation inhibits DNA-binding activity upon heat shock. Deacetylated on Lys-80 by SIRT1; this deacetylation increases DNA-binding activity. Ubiquitinated by SCF(BTRC) and degraded following stimulus-dependent phosphorylation by PLK1 in mitosis. Polyubiquitinated. Undergoes proteasomal degradation upon heat shock and during the attenuation and recovery phase period of the heat shock response.

It is found in the nucleus. The protein resides in the cytoplasm. Its subcellular location is the nucleoplasm. The protein localises to the perinuclear region. It localises to the cytoskeleton. It is found in the spindle pole. The protein resides in the microtubule organizing center. Its subcellular location is the centrosome. The protein localises to the chromosome. It localises to the centromere. It is found in the kinetochore. Functionally, functions as a stress-inducible and DNA-binding transcription factor that plays a central role in the transcriptional activation of the heat shock response (HSR), leading to the expression of a large class of molecular chaperones, heat shock proteins (HSPs), that protect cells from cellular insult damage. In unstressed cells, is present in a HSP90-containing multichaperone complex that maintains it in a non-DNA-binding inactivated monomeric form. Upon exposure to heat and other stress stimuli, undergoes homotrimerization and activates HSP gene transcription through binding to site-specific heat shock elements (HSEs) present in the promoter regions of HSP genes. Upon heat shock stress, forms a chromatin-associated complex with TTC5/STRAP and p300/EP300 to stimulate HSR transcription, therefore increasing cell survival. Activation is reversible, and during the attenuation and recovery phase period of the HSR, returns to its unactivated form. Binds to inverted 5'-NGAAN-3' pentamer DNA sequences. Binds to chromatin at heat shock gene promoters. Activates transcription of transcription factor FOXR1 which in turn activates transcription of the heat shock chaperones HSPA1A and HSPA6 and the antioxidant NADPH-dependent reductase DHRS2. Also serves several other functions independently of its transcriptional activity. Involved in the repression of Ras-induced transcriptional activation of the c-fos gene in heat-stressed cells. Positively regulates pre-mRNA 3'-end processing and polyadenylation of HSP70 mRNA upon heat-stressed cells in a symplekin (SYMPK)-dependent manner. Plays a role in nuclear export of stress-induced HSP70 mRNA. Plays a role in the regulation of mitotic progression. Also plays a role as a negative regulator of non-homologous end joining (NHEJ) repair activity in a DNA damage-dependent manner. Involved in stress-induced cancer cell proliferation in a IER5-dependent manner. The chain is Heat shock factor protein 1 from Bos taurus (Bovine).